The following is a 290-amino-acid chain: Probable 2-(5''-triphosphoribosyl)-3'-dephosphocoenzyme-A synthase (290 aa).

Belongs to the CitG/MdcB family.

It catalyses the reaction 3'-dephospho-CoA + ATP = 2'-(5''-triphospho-alpha-D-ribosyl)-3'-dephospho-CoA + adenine. Functionally, involved in the formation of 2-(5''-phosphoribosyl)-3'-dephosphocoenzyme-A, the prosthetic group of the acyl-carrier protein of the malonate decarboxylase. The sequence is that of Probable 2-(5''-triphosphoribosyl)-3'-dephosphocoenzyme-A synthase from Pseudomonas fluorescens (strain Pf0-1).